Here is a 152-residue protein sequence, read N- to C-terminus: FAD synthase (152 aa).

ATP contacts are provided by residues 9 to 10, 14 to 17, and Asp92; these read TF and HPGH.

It belongs to the archaeal FAD synthase family. As to quaternary structure, homodimer. It depends on a divalent metal cation as a cofactor.

It carries out the reaction FMN + ATP + H(+) = FAD + diphosphate. Its pathway is cofactor biosynthesis; FAD biosynthesis; FAD from FMN: step 1/1. In terms of biological role, catalyzes the transfer of the AMP portion of ATP to flavin mononucleotide (FMN) to produce flavin adenine dinucleotide (FAD) coenzyme. This Ferroglobus placidus (strain DSM 10642 / AEDII12DO) protein is FAD synthase.